Reading from the N-terminus, the 1217-residue chain is Structural maintenance of chromosomes protein 3 (1217 aa).

Residue 32–39 (GRNGSGKS) coordinates ATP. N6-acetyllysine is present on residues K105, K106, and K140. Coiled coils occupy residues 179–350 (MKET…TEPK) and 393–503 (KWIK…ATGK). The tract at residues 242–268 (LSAKRETSGEKSRQLRDAQQDARDKME) is disordered. The SMC hinge domain maps to 530–642 (NGYHGIVMNN…CRSMEVSTQL (113 aa)). 2 coiled-coil regions span residues 669–916 (YDTR…DAIN) and 958–989 (QTLS…ALDQ). A Phosphothreonine modification is found at T783. Phosphoserine occurs at positions 787 and 886. Phosphoserine is present on residues S1013, S1065, S1067, S1074, and S1083. Residues 1059-1090 (KGDVEGSQSQDEGEGSGESERGSGSQSSVPSV) are disordered. K1190 carries the post-translational modification N6-acetyllysine.

It belongs to the SMC family. SMC3 subfamily. In terms of assembly, forms a heterodimer with SMC1A or SMC1B in cohesin complexes. Cohesin complexes are composed of the SMC1 (SMC1A or SMC1B) and SMC3 heterodimer attached via their SMC hinge domain, RAD21 which link them, and one STAG protein (STAG1, STAG2 or STAG3), which interacts with RAD21. Also found in meiosis-specific cohesin complexes. Found in a complex with SMC1A, CDCA5 and RAD21, PDS5A/SCC-112 and PDS5B/APRIN. Interacts with PDS5A and WAPL; regulated by SMC3 acetylation. Interacts with NUMA1, and forms a ternary complex with KIF3B and KIFAP3, suggesting a function in tethering the chromosomes to the spindle pole and a function in chromosome movement. Interacts with SYCP2 and RPGR. Interacts (via SMC hinge domain) with KIAA1328 (via N- and C-terminal domains). Interacts with DDX11. The cohesin complex interacts with the cohesin loading complex subunits NIPBL/Scc2 (via HEAT repeats) and MAU2/Scc4. NIPBL directly contacts all members of the complex, RAD21, SMC1A/B, SMC3 and STAG1. Interacts with MXI1, MXD3 and MXD4. Interacts with STAG3. Interacts with the NuRD complex component HDAC2; the interaction is direct. Phosphorylated at Ser-1083 in a SPO11-dependent manner. Post-translationally, acetylation at Lys-105 and Lys-106 by ESCO1 is important for genome stability and S phase sister chromatid cohesion. Regulated by DSCC1, it is required for processive DNA synthesis, coupling sister chromatid cohesion establishment during S phase to DNA replication. Deacetylation by HDAC8, regulates release of the cohesin complex from chromatin. In terms of processing, ubiquitinated by the DCX(DCAF15) complex, leading to its degradation. As to expression, spermatocytes (at protein level). Widely expressed, with higher expression in testis and brain.

The protein resides in the nucleus. The protein localises to the chromosome. It localises to the centromere. Central component of cohesin, a complex required for chromosome cohesion during the cell cycle. The cohesin complex may form a large proteinaceous ring within which sister chromatids can be trapped. At anaphase, the complex is cleaved and dissociates from chromatin, allowing sister chromatids to segregate. Cohesion is coupled to DNA replication and is involved in DNA repair. The cohesin complex also plays an important role in spindle pole assembly during mitosis and in chromosomes movement. The polypeptide is Structural maintenance of chromosomes protein 3 (Smc3) (Mus musculus (Mouse)).